The sequence spans 370 residues: 3-dehydroquinate synthase (370 aa).

NAD(+) is bound by residues 112–116 (GVVGD), 136–137 (TS), lysine 149, lysine 158, and 176–179 (TLRT). The Zn(2+) site is built by glutamate 191, histidine 254, and histidine 276.

This sequence belongs to the sugar phosphate cyclases superfamily. Dehydroquinate synthase family. Co(2+) serves as cofactor. It depends on Zn(2+) as a cofactor. Requires NAD(+) as cofactor.

It is found in the cytoplasm. The catalysed reaction is 7-phospho-2-dehydro-3-deoxy-D-arabino-heptonate = 3-dehydroquinate + phosphate. It functions in the pathway metabolic intermediate biosynthesis; chorismate biosynthesis; chorismate from D-erythrose 4-phosphate and phosphoenolpyruvate: step 2/7. Catalyzes the conversion of 3-deoxy-D-arabino-heptulosonate 7-phosphate (DAHP) to dehydroquinate (DHQ). This chain is 3-dehydroquinate synthase, found in Xanthomonas oryzae pv. oryzae (strain PXO99A).